Here is a 61-residue protein sequence, read N- to C-terminus: Large ribosomal subunit protein uL30 (61 aa).

The protein belongs to the universal ribosomal protein uL30 family. As to quaternary structure, part of the 50S ribosomal subunit.

In Corynebacterium urealyticum (strain ATCC 43042 / DSM 7109), this protein is Large ribosomal subunit protein uL30.